Reading from the N-terminus, the 527-residue chain is PTS system maltose-specific EIICB component (527 aa).

The PTS EIIC type-1 domain maps to 1–418 (MMQKIQRFGS…FNIATPGREK (418 aa)). A run of 12 helical transmembrane segments spans residues 8–28 (FGSA…IVGI), 59–79 (GWTV…VALA), 93–113 (VYLT…GAFG), 132–152 (IKTL…VVFL), 173–193 (YIVM…SYIW), 200–220 (IGSL…IYTF), 224–244 (ILIP…GPAV), 276–296 (FALH…AFYV), 305–325 (LVAG…ITEP), 326–346 (IEFT…VLAA), 357–377 (VVGN…IPLF), and 382–402 (MTYV…FFVF). Residues 449–527 (DDTAFLYIEA…RERVEKILNQ (79 aa)) enclose the PTS EIIB type-1 domain. Cys-471 (phosphocysteine intermediate; for EIIB activity) is an active-site residue.

The protein resides in the cell membrane. It carries out the reaction D-maltose(out) + N(pros)-phospho-L-histidyl-[protein] = alpha-maltose 6'-phosphate(in) + L-histidyl-[protein]. The phosphoenolpyruvate-dependent sugar phosphotransferase system (sugar PTS), a major carbohydrate active transport system, catalyzes the phosphorylation of incoming sugar substrates concomitantly with their translocation across the cell membrane. This system is involved in maltose transport. In Bacillus subtilis (strain 168), this protein is PTS system maltose-specific EIICB component.